Here is a 296-residue protein sequence, read N- to C-terminus: Transcription factor bHLH99 (296 aa).

One can recognise a bHLH domain in the interval 99–150 (NQRMNHIAVERNRRKQMNHFLSILKSMMPLSYSQPNDQASIIEGTISYLKKL).

As to quaternary structure, homodimer. Expressed constitutively in roots, stems, and flowers.

It localises to the nucleus. The protein is Transcription factor bHLH99 (BHLH99) of Arabidopsis thaliana (Mouse-ear cress).